A 533-amino-acid polypeptide reads, in one-letter code: Flavin-containing monooxygenase 5 (533 aa).

Arg5 carries the dimethylated arginine modification. Residues 10 to 14 (GAGAS), Glu33, and 41 to 42 (LW) each bind FAD. Ser54 bears the Phosphoserine mark. Tyr56 carries the phosphotyrosine modification. Ser58 bears the Phosphoserine mark. Position 62-63 (62-63 (NT)) interacts with FAD. 196–199 (SGGD) contacts NADP(+). Ser280 bears the Phosphoserine mark. At Thr284 the chain carries Phosphothreonine. Residue Ser401 is modified to Phosphoserine. A helical membrane pass occupies residues 513-533 (LVTVRVLMLAVAFFAVILAYF).

It belongs to the FMO family. FAD serves as cofactor. Expressed in liver (at protein level). Expressed in the mucosal epithelium of the gastrointestinal tract.

The protein resides in the microsome membrane. Its subcellular location is the endoplasmic reticulum membrane. The catalysed reaction is N,N-dimethylaniline + NADPH + O2 + H(+) = N,N-dimethylaniline N-oxide + NADP(+) + H2O. It carries out the reaction NADPH + O2 + H(+) = H2O2 + NADP(+). It catalyses the reaction heptan-2-one + NADPH + O2 + H(+) = pentyl acetate + NADP(+) + H2O. The enzyme catalyses octan-3-one + NADPH + O2 + H(+) = pentyl propanoate + NADP(+) + H2O. The catalysed reaction is octan-3-one + NADPH + O2 + H(+) = ethyl hexanoate + NADP(+) + H2O. It carries out the reaction hexan-3-one + NADPH + O2 + H(+) = ethyl butanoate + NADP(+) + H2O. It catalyses the reaction hexan-3-one + NADPH + O2 + H(+) = propyl propanoate + NADP(+) + H2O. The enzyme catalyses heptan-4-one + NADPH + O2 + H(+) = propyl butanoate + NADP(+) + H2O. The catalysed reaction is (2E)-geranial + NADPH + O2 + H(+) = (1E)-2,6-dimethylhepta-1,5-dien-1-yl formate + NADP(+) + H2O. It carries out the reaction sulcatone + NADPH + O2 + H(+) = 4-methylpent-3-en-1-yl acetate + NADP(+) + H2O. Acts as a Baeyer-Villiger monooxygenase on a broad range of substrates. Catalyzes the insertion of an oxygen atom into a carbon-carbon bond adjacent to a carbonyl, which converts ketones to esters. Active on diverse carbonyl compounds, whereas soft nucleophiles are mostly non- or poorly reactive. In contrast with other forms of FMO it is non- or poorly active on 'classical' substrates such as drugs, pesticides, and dietary components containing soft nucleophilic heteroatoms. Able to oxidize drug molecules bearing a carbonyl group on an aliphatic chain, such as nabumetone and pentoxifylline. Also, in the absence of substrates, shows slow but yet significant NADPH oxidase activity. Acts as a positive modulator of cholesterol biosynthesis as well as glucose homeostasis, promoting metabolic aging via pleiotropic effects. The chain is Flavin-containing monooxygenase 5 from Mus musculus (Mouse).